A 306-amino-acid chain; its full sequence is Protoheme IX farnesyltransferase (306 aa).

Transmembrane regions (helical) follow at residues 35–55, 61–81, 106–126, 129–149, 157–177, 183–203, 224–244, 245–265, and 286–306; these read LIVF…PTWL, LIAC…NCLV, LTLA…YVWV, LTMW…TVIL, IVIG…AMTG, ALIL…ALAL, EFTR…CLMP, FIFK…SIGF, and RFSL…HYLI.

Belongs to the UbiA prenyltransferase family. Protoheme IX farnesyltransferase subfamily.

It is found in the cell inner membrane. The enzyme catalyses heme b + (2E,6E)-farnesyl diphosphate + H2O = Fe(II)-heme o + diphosphate. It participates in porphyrin-containing compound metabolism; heme O biosynthesis; heme O from protoheme: step 1/1. In terms of biological role, converts heme B (protoheme IX) to heme O by substitution of the vinyl group on carbon 2 of heme B porphyrin ring with a hydroxyethyl farnesyl side group. This Polaromonas naphthalenivorans (strain CJ2) protein is Protoheme IX farnesyltransferase.